The primary structure comprises 436 residues: 3-hydroxy-3-methylglutaryl-coenzyme A reductase (436 aa).

Catalysis depends on charge relay system residues E99, K277, and D293. H390 serves as the catalytic Proton donor.

It belongs to the HMG-CoA reductase family.

It catalyses the reaction (R)-mevalonate + 2 NADP(+) + CoA = (3S)-3-hydroxy-3-methylglutaryl-CoA + 2 NADPH + 2 H(+). Its pathway is metabolic intermediate biosynthesis; (R)-mevalonate biosynthesis; (R)-mevalonate from acetyl-CoA: step 3/3. Its function is as follows. Converts HMG-CoA to mevalonate. This is 3-hydroxy-3-methylglutaryl-coenzyme A reductase (hmgA) from Archaeoglobus fulgidus (strain ATCC 49558 / DSM 4304 / JCM 9628 / NBRC 100126 / VC-16).